We begin with the raw amino-acid sequence, 374 residues long: Nucleosome assembly protein 1;1 (374 aa).

Positions 26–80 (VNALKNKLQDITGKPTNVLECLSPNVRKRVEVLKEIQSQHDELEAKFYEERAVLE) form a coiled coil. Positions 47–62 (LSPNVRKRVEVLKEIQ) match the Nuclear export signal motif. The short motif at 223–228 (KKKPKK) is the Nuclear localization signal element. Residues 299–339 (AAEDDFADLEDDDDDDEEDDDDEDEEEEDDEDDEDEEDEDD) are compositionally biased toward acidic residues. Residues 299–374 (AAEDDFADLE…GERPPECKQQ (76 aa)) are disordered. Residues 343–355 (KKKSSAVRKRGVR) show a composition bias toward basic residues. Cysteine methyl ester is present on Cys371. The S-farnesyl cysteine moiety is linked to residue Cys371. The propeptide at 372-374 (KQQ) is removed in mature form.

Belongs to the nucleosome assembly protein (NAP) family. In terms of assembly, binds preferentially histones H4 and H1 in vitro. Interacts with CYCB1;1.

It is found in the nucleus. The protein localises to the cytoplasm. May modulate chromatin structure by regulation of nucleosome assembly/disassembly. Could function together with B-type cyclins in the regulation of microtubule dynamics. This Nicotiana tabacum (Common tobacco) protein is Nucleosome assembly protein 1;1 (NAP1;1).